The chain runs to 323 residues: Protoheme IX farnesyltransferase (323 aa).

A run of 9 helical transmembrane segments spans residues 28–48, 50–70, 99–119, 122–142, 150–170, 178–198, 223–243, 244–264, and 279–299; these read IIPLLLITTAAAMWIASNGQV, PVLLLVTLLGGTLAAASAQTL, HALIFAIILAVLSFTLFVVFV, ASALLAMSGIAFYMLIYTHML, IVIGGAAGSIPPLVGWAAVTG, ALFAIIFLWTPPHFWALALMI, IWIYTLIVVPFTFILVYPLAA, SGIVYTLVALVLGGMFIYKTW, and LFKYSILYMMLLCTGMVVDSL.

This sequence belongs to the UbiA prenyltransferase family. Protoheme IX farnesyltransferase subfamily.

It is found in the cell inner membrane. It carries out the reaction heme b + (2E,6E)-farnesyl diphosphate + H2O = Fe(II)-heme o + diphosphate. It functions in the pathway porphyrin-containing compound metabolism; heme O biosynthesis; heme O from protoheme: step 1/1. Its function is as follows. Converts heme B (protoheme IX) to heme O by substitution of the vinyl group on carbon 2 of heme B porphyrin ring with a hydroxyethyl farnesyl side group. The chain is Protoheme IX farnesyltransferase from Gloeothece citriformis (strain PCC 7424) (Cyanothece sp. (strain PCC 7424)).